A 257-amino-acid polypeptide reads, in one-letter code: Receptor expression-enhancing protein 4 (257 aa).

Transmembrane regions (helical) follow at residues 1-21 (MVSWMICRLVVLIFGMLYPAY) and 42-62 (WIVFAIFMAAETFTDIFISWF). Ser152 and Ser194 each carry phosphoserine. Positions 159-257 (IPDTSAPTYQ…KKTIPSDLDS (99 aa)) are disordered. Thr196 carries the post-translational modification Phosphothreonine. Residue Ser202 is modified to Phosphoserine. Thr250 is modified (phosphothreonine). Ser253 is subject to Phosphoserine.

It belongs to the DP1 family.

The protein resides in the endoplasmic reticulum membrane. Its function is as follows. Microtubule-binding protein required to ensure proper cell division and nuclear envelope reassembly by sequestering the endoplasmic reticulum away from chromosomes during mitosis. Probably acts by clearing the endoplasmic reticulum membrane from metaphase chromosomes. The chain is Receptor expression-enhancing protein 4 (Reep4) from Rattus norvegicus (Rat).